Consider the following 158-residue polypeptide: MGHFTFTGLCLLAMFLSLRGAECYTCPIDWLPKNGLCYKVFSNPNTWLDAELFCRKFKPGCRLASLHRDADSADLAEYISDYLKVDGSVWIGLNDPQKKRTWVWSDRSSSNYFSWNQGEPNNSKNKEYCVHLWAPTGYLKWNDAPCESLHPFLCQCKY.

A signal peptide spans 1 to 23; the sequence is MGHFTFTGLCLLAMFLSLRGAEC. Cystine bridges form between cysteine 26/cysteine 37, cysteine 54/cysteine 154, cysteine 61/cysteine 156, and cysteine 129/cysteine 146. Residues 33–155 form the C-type lectin domain; it reads KNGLCYKVFS…CESLHPFLCQ (123 aa). The Mannose-binding signature appears at 119 to 121; it reads EPN. Asparagine 121 is a glycosylation site (N-linked (GlcNAc...) asparagine). Ca(2+) contacts are provided by glutamate 127, asparagine 142, and aspartate 143.

Belongs to the true venom lectin family. As to quaternary structure, dimer. Probably non-covalently linked. Expressed by the venom gland.

The protein localises to the secreted. Functionally, recombinant C-type lectin BML-2 is able to agglutinate erythrocytes. May be a calcium-dependent lectin. In Bungarus multicinctus (Many-banded krait), this protein is C-type lectin BML-2.